Here is a 459-residue protein sequence, read N- to C-terminus: DNA-binding protein P3A2 (459 aa).

A disordered region spans residues 1-25 (MMISEDISEPSSPDTPFDDSDLLNS).

Belongs to the NRF1/Ewg family.

It localises to the nucleus. Transcriptional regulator that interacts with specific sites in the control region of the cyIIIa actin gene. Also binds specifically to similar target sites located in the regulatory region of the SM50 gene. This chain is DNA-binding protein P3A2, found in Strongylocentrotus purpuratus (Purple sea urchin).